A 478-amino-acid polypeptide reads, in one-letter code: Protein nucleotidyltransferase YdiU (478 aa).

Residues Gly84, Gly86, Arg87, Lys107, Asp119, Gly120, Arg170, and Arg177 each coordinate ATP. Asp246 (proton acceptor) is an active-site residue. Residues Asn247 and Asp256 each coordinate Mg(2+). An ATP-binding site is contributed by Asp256.

This sequence belongs to the SELO family. Mg(2+) serves as cofactor. The cofactor is Mn(2+).

It catalyses the reaction L-seryl-[protein] + ATP = 3-O-(5'-adenylyl)-L-seryl-[protein] + diphosphate. It carries out the reaction L-threonyl-[protein] + ATP = 3-O-(5'-adenylyl)-L-threonyl-[protein] + diphosphate. The catalysed reaction is L-tyrosyl-[protein] + ATP = O-(5'-adenylyl)-L-tyrosyl-[protein] + diphosphate. The enzyme catalyses L-histidyl-[protein] + UTP = N(tele)-(5'-uridylyl)-L-histidyl-[protein] + diphosphate. It catalyses the reaction L-seryl-[protein] + UTP = O-(5'-uridylyl)-L-seryl-[protein] + diphosphate. It carries out the reaction L-tyrosyl-[protein] + UTP = O-(5'-uridylyl)-L-tyrosyl-[protein] + diphosphate. In terms of biological role, nucleotidyltransferase involved in the post-translational modification of proteins. It can catalyze the addition of adenosine monophosphate (AMP) or uridine monophosphate (UMP) to a protein, resulting in modifications known as AMPylation and UMPylation. This chain is Protein nucleotidyltransferase YdiU, found in Escherichia coli O157:H7.